A 475-amino-acid polypeptide reads, in one-letter code: ATP synthase subunit beta (475 aa).

ATP is bound at residue 155-162 (GGAGVGKT).

The protein belongs to the ATPase alpha/beta chains family. In terms of assembly, F-type ATPases have 2 components, CF(1) - the catalytic core - and CF(0) - the membrane proton channel. CF(1) has five subunits: alpha(3), beta(3), gamma(1), delta(1), epsilon(1). CF(0) has three main subunits: a(1), b(2) and c(9-12). The alpha and beta chains form an alternating ring which encloses part of the gamma chain. CF(1) is attached to CF(0) by a central stalk formed by the gamma and epsilon chains, while a peripheral stalk is formed by the delta and b chains.

It localises to the cell inner membrane. The catalysed reaction is ATP + H2O + 4 H(+)(in) = ADP + phosphate + 5 H(+)(out). In terms of biological role, produces ATP from ADP in the presence of a proton gradient across the membrane. The catalytic sites are hosted primarily by the beta subunits. In Rhizobium etli (strain CIAT 652), this protein is ATP synthase subunit beta.